Consider the following 446-residue polypeptide: uncharacterized protein (446 aa).

The interval 141-282 (TEAETNGTRP…GPKPKVKRVS (142 aa)) is disordered. A compositionally biased stretch (polar residues) spans 159–170 (NSGSKPKAGTQS). Residues 194–210 (IKSERRSISQGGEKDKA) are compositionally biased toward basic and acidic residues. Residues S200, S202, S212, and S214 each carry the phosphoserine modification. 2 stretches are compositionally biased toward low complexity: residues 211–221 (SSSSPSSSQQS) and 229–239 (SPSQQNSRSSS). Phosphoserine is present on S251. Residues 269–280 (GKSRGPKPKVKR) are compositionally biased toward basic residues. S282 and S307 each carry phosphoserine.

This is an uncharacterized protein from Drosophila melanogaster (Fruit fly).